The sequence spans 121 residues: Small ribosomal subunit protein bS6 (121 aa).

The protein belongs to the bacterial ribosomal protein bS6 family.

Functionally, binds together with bS18 to 16S ribosomal RNA. The protein is Small ribosomal subunit protein bS6 (rpsF) of Rickettsia prowazekii (strain Madrid E).